The chain runs to 347 residues: P2Y purinoceptor 12 (347 aa).

Residues 1–33 (MDVPGVNTTSANTTFSPGTSTLCVRDYKITQVL) are Extracellular-facing. Residues Asn-7 and Asn-12 are each glycosylated (N-linked (GlcNAc...) asparagine). 2 disulfide bridges follow: Cys-23–Cys-276 and Cys-103–Cys-181. The chain crosses the membrane as a helical span at residues 34–56 (FPLLYTVLFFAGLITNSLAMRIF). Residues 57-67 (FQIRSKSNFII) lie on the Cytoplasmic side of the membrane. Residues Ser-61 and Ser-63 each carry the phosphoserine modification. Residues 68-88 (FLKNTVISDLLMILTFPFKIL) traverse the membrane as a helical segment. The Extracellular portion of the chain corresponds to 89-103 (SDAKLGAGPLRTLVC). ADP contacts are provided by Arg-99, Cys-103, and Tyr-111. A helical transmembrane segment spans residues 104-124 (QVTSVTFYFTMYISISFLGLI). The Cytoplasmic segment spans residues 125-148 (TIDRYLKTTRPFKTSSPSNLLGAK). The chain crosses the membrane as a helical span at residues 149–168 (ILSVVIWAFMFLISLPNMIL). ADP is bound by residues 162 to 165 (SLPN), 181 to 185 (CSFLK), His-193, and Asn-197. The Extracellular segment spans residues 169–191 (TNRRPKDKDVTKCSFLKSEFGLV). A helical membrane pass occupies residues 192–213 (WHEIVNYICQVIFWINFLIVIV). Over 214–239 (CYSLITKELYRSYVRTRGSAKVPKKK) the chain is Cytoplasmic. The chain crosses the membrane as a helical span at residues 240–265 (VNVKVFIIIAVFFICFVPFHFARIPY). Residues 262-265 (RIPY), Gln-269, and Lys-286 each bind ADP. The Extracellular segment spans residues 266–284 (TLSQTRAVFDCSAENTLFY). The chain crosses the membrane as a helical span at residues 285–304 (VKESTLWLTSLNACLDPFIY). At 305–347 (FFLCKSFRNSLTSMLRCSNSTSTSGTNKKKGQEGGEPSEETPM) the chain is on the cytoplasmic side. Residues 321 to 347 (CSNSTSTSGTNKKKGQEGGEPSEETPM) form a disordered region.

It belongs to the G-protein coupled receptor 1 family.

The protein localises to the cell membrane. In terms of biological role, receptor for ADP and ATP coupled to G-proteins that inhibit the adenylyl cyclase second messenger system. Required for normal platelet aggregation and blood coagulation. This Mus musculus (Mouse) protein is P2Y purinoceptor 12 (P2ry12).